Here is a 345-residue protein sequence, read N- to C-terminus: DNA-directed RNA polymerase subunit alpha (345 aa).

The tract at residues 1–234 (MRKNEMSTSK…DLLTTFLYVR (234 aa)) is alpha N-terminal domain (alpha-NTD). The alpha C-terminal domain (alpha-CTD) stretch occupies residues 266-345 (LEERVLENRF…DKKIVLNRRK (80 aa)).

This sequence belongs to the RNA polymerase alpha chain family. In plastids the minimal PEP RNA polymerase catalytic core is composed of four subunits: alpha, beta, beta', and beta''. When a (nuclear-encoded) sigma factor is associated with the core the holoenzyme is formed, which can initiate transcription.

The protein localises to the plastid. It is found in the chloroplast. The catalysed reaction is RNA(n) + a ribonucleoside 5'-triphosphate = RNA(n+1) + diphosphate. Functionally, DNA-dependent RNA polymerase catalyzes the transcription of DNA into RNA using the four ribonucleoside triphosphates as substrates. The chain is DNA-directed RNA polymerase subunit alpha from Adiantum capillus-veneris (Maidenhair fern).